Reading from the N-terminus, the 606-residue chain is Replication protein E1 (606 aa).

A Nuclear localization signal motif is present at residues 78 to 80 (KRK). Phosphoserine; by host occurs at positions 83 and 91. The Nuclear export signal signature appears at 90-99 (LSPRLESISL). The interval 146-309 (GSGDVDIHYT…TILGHKSAEA (164 aa)) is DNA-binding region. An SF3 helicase domain is found at 408-558 (INFIVFLTAL…FPMKADNTPQ (151 aa)). 434 to 441 (GPPNSGKS) serves as a coordination point for ATP. A Glycyl lysine isopeptide (Lys-Gly) (interchain with G-Cter in SUMO) cross-link involves residue K515. Residues 581-606 (DQEEEGEDGESQRAFQCSARSANEHL) form a disordered region. The span at 593–606 (RAFQCSARSANEHL) shows a compositional bias: polar residues.

This sequence belongs to the papillomaviridae E1 protein family. In terms of assembly, can form hexamers. Interacts with E2 protein; this interaction increases E1 DNA binding specificity. Interacts with host DNA polymerase subunit POLA2. Interacts with host single stranded DNA-binding protein RPA1. Interacts with host TOP1; this interaction stimulates the enzymatic activity of TOP1. Post-translationally, phosphorylated. In terms of processing, sumoylated.

Its subcellular location is the host nucleus. The enzyme catalyses Couples ATP hydrolysis with the unwinding of duplex DNA by translocating in the 3'-5' direction.. The catalysed reaction is ATP + H2O = ADP + phosphate + H(+). ATP-dependent DNA 3'-5' helicase required for initiation of viral DNA replication. It forms a complex with the viral E2 protein. The E1-E2 complex binds to the replication origin which contains binding sites for both proteins. During the initial step, a dimer of E1 interacts with a dimer of protein E2 leading to a complex that binds the viral origin of replication with high specificity. Then, a second dimer of E1 displaces the E2 dimer in an ATP-dependent manner to form the E1 tetramer. Following this, two E1 monomers are added to each half of the site, which results in the formation of two E1 trimers on the viral ori. Subsequently, two hexamers will be created. The double hexamer acts as a bi-directional helicase machinery and unwinds the viral DNA and then recruits the host DNA polymerase to start replication. This chain is Replication protein E1, found in Human papillomavirus 5.